Here is a 977-residue protein sequence, read N- to C-terminus: Dynamin-like GTPase OPA1, mitochondrial (977 aa).

Residues 1–86 constitute a mitochondrion transit peptide; it reads MWRTKAAAAC…VKYGYQSYRN (86 aa). Topologically, residues 87 to 95 are mitochondrial matrix; that stretch reads FWLARLASR. Residues 96-112 traverse the membrane as a helical segment; sequence LLKIRYLILGSAVGGGY. At 113–787 the chain is on the mitochondrial intermembrane side; sequence TAKKTYDQWE…SVIEDMVGPD (675 aa). Residues 224 to 271 are a coiled coil; it reads KKVSDKEKIDQLQEELLRTQLKYQRMLERLEKENKELRKLVLQRDDKG. A Dynamin-type G domain is found at 302 to 578; that stretch reads QDHLPRVVVV…FWKMVRESVE (277 aa). Residues 312–319 are G1 motif; sequence GDQSAGKT. The GTP site is built by Ser-315, Gly-317, Lys-318, Thr-319, Ser-320, and Gly-334. Position 319 (Thr-319) interacts with Mg(2+). Residues 338 to 341 are G2 motif; it reads MMTR. Positions 340 and 415 each coordinate Mg(2+). The G3 motif stretch occupies residues 415 to 418; sequence DLPG. Residues 484 to 487 are G4 motif; sequence TKVD. Residues Lys-485, Asp-487, and Thr-520 each contribute to the GTP site. The interval 518 to 521 is G5 motif; that stretch reads VVTG. 2 stalk region regions span residues 606–853 and 891–945; these read DRNE…IKDT and CNDI…VKLL. The segment at 753 to 873 is paddle region; it reads SDKQQWDAAI…KTALNHCNLC (121 aa). An intramembrane segment occupies 788–798; that stretch reads WKKRWLYWISR. Residues 799–977 are Mitochondrial intermembrane-facing; that stretch reads TKEQNIRNET…AFIEALHQEK (179 aa). A disulfide bridge connects residues Cys-873 and Cys-891. Residues 911–977 adopt a coiled-coil conformation; that stretch reads LRQQLTNTEV…AFIEALHQEK (67 aa).

This sequence belongs to the TRAFAC class dynamin-like GTPase superfamily. Dynamin/Fzo/YdjA family. As to quaternary structure, oligomeric complex consisting of membrane-bound and soluble forms of OPA1. Cleaved by OMA1 or YME1L downstream of the transmembrane region in response to different signals to generate soluble forms. Cleaved by OMA1 at position S1 following stress conditions, generating the short soluble form (Dynamin-like GTPase OPA1, short form; S-OPA1).

The protein localises to the mitochondrion inner membrane. The protein resides in the mitochondrion intermembrane space. It catalyses the reaction GTP + H2O = GDP + phosphate + H(+). Dynamin-related GTPase that is essential for normal mitochondrial morphology by mediating fusion of the mitochondrial inner membranes, regulating cristae morphology and maintaining respiratory chain function. Exists in two forms: the transmembrane, long form (Dynamin-like GTPase OPA1, long form; L-OPA1), which is tethered to the inner mitochondrial membrane, and the short soluble form (Dynamin-like GTPase OPA1, short form; S-OPA1), which results from proteolytic cleavage and localizes in the intermembrane space. Both forms (L-OPA1 and S-OPA1) cooperate to catalyze the fusion of the mitochondrial inner membrane. The equilibrium between L-OPA1 and S-OPA1 is essential: excess levels of S-OPA1, produced by cleavage by OMA1 following loss of mitochondrial membrane potential, lead to an impaired equilibrium between L-OPA1 and S-OPA1, inhibiting mitochondrial fusion. The balance between L-OPA1 and S-OPA1 also influences cristae shape and morphology. Its role in mitochondrial morphology is required for mitochondrial genome maintenance. Functionally, constitutes the transmembrane long form (L-OPA1) that plays a central role in mitochondrial inner membrane fusion and cristae morphology. L-OPA1 and the soluble short form (S-OPA1) form higher-order helical assemblies that coordinate the fusion of mitochondrial inner membranes. Inner membrane-anchored L-OPA1 molecules initiate membrane remodeling by recruiting soluble S-OPA1 to rapidly polymerize into a flexible cylindrical scaffold encaging the mitochondrial inner membrane. Once at the membrane surface, the formation of S-OPA1 helices induce bilayer curvature. OPA1 dimerization through the paddle region, which inserts into cardiolipin-containing membrane, promotes GTP hydrolysis and the helical assembly of a flexible OPA1 lattice on the membrane, which drives membrane curvature and mitochondrial fusion. Plays a role in the maintenance and remodeling of mitochondrial cristae, some invaginations of the mitochondrial inner membrane that provide an increase in the surface area. Probably acts by forming helical filaments at the inside of inner membrane tubes with the shape and dimensions of crista junctions. In terms of biological role, constitutes the soluble short form (S-OPA1) generated by cleavage by OMA1, which plays a central role in mitochondrial inner membrane fusion and cristae morphology. The transmembrane long form (L-OPA1) and the S-OPA1 form higher-order helical assemblies that coordinate the fusion of mitochondrial inner membranes. Inner membrane-anchored L-OPA1 molecules initiate membrane remodeling by recruiting soluble S-OPA1 to rapidly polymerize into a flexible cylindrical scaffold encaging the mitochondrial inner membrane. Once at the membrane surface, the formation of S-OPA1 helices induce bilayer curvature. OPA1 dimerization through the paddle region, which inserts into cardiolipin-containing membrane, promotes GTP hydrolysis and the helical assembly of a flexible OPA1 lattice on the membrane, which drives membrane curvature and mitochondrial fusion. Excess levels of S-OPA1 produced by cleavage by OMA1 following stress conditions that induce loss of mitochondrial membrane potential, lead to an impaired equilibrium between L-OPA1 and S-OPA1, thereby inhibiting mitochondrial fusion. Plays a role in the maintenance and remodeling of mitochondrial cristae, some invaginations of the mitochondrial inner membrane that provide an increase in the surface area. Probably acts by forming helical filaments at the inside of inner membrane tubes with the shape and dimensions of crista junctions. The protein is Dynamin-like GTPase OPA1, mitochondrial of Gallus gallus (Chicken).